The primary structure comprises 257 residues: Probable enoyl-CoA hydratase (257 aa).

Belongs to the enoyl-CoA hydratase/isomerase family.

The enzyme catalyses a (3S)-3-hydroxyacyl-CoA = a (2E)-enoyl-CoA + H2O. It catalyses the reaction a 4-saturated-(3S)-3-hydroxyacyl-CoA = a (3E)-enoyl-CoA + H2O. Could possibly oxidize fatty acids using specific components. This chain is Probable enoyl-CoA hydratase (fadB1), found in Rhodobacter capsulatus (strain ATCC BAA-309 / NBRC 16581 / SB1003).